A 601-amino-acid chain; its full sequence is Elongation factor 4 (601 aa).

Residues 7–189 form the tr-type G domain; sequence DRIRNFSIIA…ALVTRLPAPK (183 aa). GTP is bound by residues 19–24 and 136–139; these read DHGKST and NKVD.

Belongs to the TRAFAC class translation factor GTPase superfamily. Classic translation factor GTPase family. LepA subfamily.

It is found in the cell inner membrane. It catalyses the reaction GTP + H2O = GDP + phosphate + H(+). In terms of biological role, required for accurate and efficient protein synthesis under certain stress conditions. May act as a fidelity factor of the translation reaction, by catalyzing a one-codon backward translocation of tRNAs on improperly translocated ribosomes. Back-translocation proceeds from a post-translocation (POST) complex to a pre-translocation (PRE) complex, thus giving elongation factor G a second chance to translocate the tRNAs correctly. Binds to ribosomes in a GTP-dependent manner. The polypeptide is Elongation factor 4 (Granulibacter bethesdensis (strain ATCC BAA-1260 / CGDNIH1)).